Reading from the N-terminus, the 262-residue chain is uncharacterized protein (262 aa).

A divalent metal cation contacts are provided by histidine 7, histidine 9, glutamate 98, histidine 138, histidine 162, and aspartate 212.

Belongs to the metallo-dependent hydrolases superfamily. TatD-type hydrolase family. It depends on a divalent metal cation as a cofactor.

This is an uncharacterized protein from Haemophilus influenzae (strain ATCC 51907 / DSM 11121 / KW20 / Rd).